The sequence spans 107 residues: Age-related maculopathy susceptibility protein 2 (107 aa).

Residues 1-21 are disordered; it reads MLRLYPGPMVTEAEGKGGPEM.

In terms of tissue distribution, detected in retina and placenta.

It localises to the cytoplasm. The sequence is that of Age-related maculopathy susceptibility protein 2 (ARMS2) from Homo sapiens (Human).